We begin with the raw amino-acid sequence, 816 residues long: S-layer protein (816 aa).

An N-terminal signal peptide occupies residues 1–29; the sequence is MAKTNSYKKVIAGTMTAAMVAGVVSPVAA. SLH domains are found at residues 30-93, 94-150, and 152-215; these read AGKS…DAKP, SFAD…KVNG, and PATK…VAKV. The BIG2 domain maps to 403-480; sequence FTSKDFKQND…TVKDSKGKEL (78 aa).

It localises to the secreted. The protein localises to the cell wall. The protein resides in the S-layer. Its function is as follows. The S-layer is a paracrystalline mono-layered assembly of proteins which coat the surface of bacteria. This chain is S-layer protein, found in Bacillus thuringiensis subsp. finitimus.